The primary structure comprises 31 residues: Potassium channel toxin alpha-KTx 5.4 (31 aa).

3 disulfide bridges follow: C3–C21, C8–C26, and C12–C28. Residues 6–9 (RRCE) form a [R/K]XCQ motif region. Y31 is modified (tyrosine amide).

Belongs to the short scorpion toxin superfamily. Potassium channel inhibitor family. Alpha-KTx 05 subfamily. Expressed by the venom gland.

The protein resides in the secreted. Blocks small conductance calcium-activated potassium channels. Shows activity on KCa2.2/KCNN2 (IC(50)=0.0243 nM), KCa2.3/KCNN3 (IC(50)=1.7 nM), and KCa2.1/KCNN1 (IC(50)=42 nM). Induces cell death when tested on human T lymphoblastic leukemia Jurkat E6.1 and human breast cancer MDA-MB-231 cell lines which constituvely express KCa2.2/KCNN2, but not on human peripheral blood lymphocytes (which do not express KCa2.2/KCNN2). The sequence is that of Potassium channel toxin alpha-KTx 5.4 from Hottentotta tamulus (Eastern Indian scorpion).